Here is a 160-residue protein sequence, read N- to C-terminus: Large ribosomal subunit protein eL21 (160 aa).

Composition is skewed to basic and acidic residues over residues 112–123 and 136–145; these read NDQKKKEAKEKG and REAHFVRTNG. The interval 112-145 is disordered; it reads NDQKKKEAKEKGTWVQLKRQPAPPREAHFVRTNG.

This sequence belongs to the eukaryotic ribosomal protein eL21 family. As to quaternary structure, component of the large ribosomal subunit.

The protein resides in the cytoplasm. It localises to the cytosol. Its subcellular location is the endoplasmic reticulum. Its function is as follows. Component of the large ribosomal subunit. The ribosome is a large ribonucleoprotein complex responsible for the synthesis of proteins in the cell. The chain is Large ribosomal subunit protein eL21 from Mus musculus (Mouse).